Reading from the N-terminus, the 272-residue chain is Phosphate import ATP-binding protein PstB (272 aa).

Positions 26–267 constitute an ABC transporter domain; it reads LEIRNLDLRY…PKKRKTEDYI (242 aa). 58–65 contributes to the ATP binding site; the sequence is GPSGCGKS.

Belongs to the ABC transporter superfamily. Phosphate importer (TC 3.A.1.7) family. As to quaternary structure, the complex is composed of two ATP-binding proteins (PstB), two transmembrane proteins (PstC and PstA) and a solute-binding protein (PstS).

It localises to the cell inner membrane. The enzyme catalyses phosphate(out) + ATP + H2O = ADP + 2 phosphate(in) + H(+). In terms of biological role, part of the ABC transporter complex PstSACB involved in phosphate import. Responsible for energy coupling to the transport system. The chain is Phosphate import ATP-binding protein PstB from Shewanella frigidimarina (strain NCIMB 400).